We begin with the raw amino-acid sequence, 180 residues long: CDP-archaeol synthase (180 aa).

The next 5 membrane-spanning stretches (helical) occupy residues 5-25, 54-74, 78-98, 118-138, and 142-162; these read LVATAFWAMLPAYVPNNAAVL, AVGTLTGVVLALALNRIAEPA, LGVDLPTFALPAAFALAFGAM, AFPGLDQLDFVVVALAAVFVV, and WALAVFTPSVLVVVLVMTPIL.

This sequence belongs to the CDP-archaeol synthase family. The cofactor is Mg(2+).

The protein resides in the cell membrane. It catalyses the reaction 2,3-bis-O-(geranylgeranyl)-sn-glycerol 1-phosphate + CTP + H(+) = CDP-2,3-bis-O-(geranylgeranyl)-sn-glycerol + diphosphate. It functions in the pathway membrane lipid metabolism; glycerophospholipid metabolism. In terms of biological role, catalyzes the formation of CDP-2,3-bis-(O-geranylgeranyl)-sn-glycerol (CDP-archaeol) from 2,3-bis-(O-geranylgeranyl)-sn-glycerol 1-phosphate (DGGGP) and CTP. This reaction is the third ether-bond-formation step in the biosynthesis of archaeal membrane lipids. This Halorubrum lacusprofundi (strain ATCC 49239 / DSM 5036 / JCM 8891 / ACAM 34) protein is CDP-archaeol synthase.